The following is a 745-amino-acid chain: uncharacterized protein (745 aa).

In terms of domain architecture, HTH araC/xylS-type spans 158–256 (NQVCDYIELH…HQTPKQYRGD (99 aa)). DNA-binding regions (H-T-H motif) lie at residues 175 to 196 (SELS…TESL) and 223 to 246 (ITDI…KHFT).

This is an uncharacterized protein from Staphylococcus aureus (strain Mu50 / ATCC 700699).